The following is a 258-amino-acid chain: Transmembrane O-methyltransferase homolog (258 aa).

S-adenosyl-L-methionine contacts are provided by residues glutamate 104, glycine 106–threonine 107, serine 112, glutamate 130, and serine 160.

This sequence belongs to the class I-like SAM-binding methyltransferase superfamily. Cation-dependent O-methyltransferase family. Interacts with LHFPL5, PCDH15, TMC1, TMC2 and TMIE. Interacts directly with TMC1. The interaction of TOMT with TMC1 and TMC2 is required for the transportation of TMC1/2 into the stereocilia of hair cells.

The protein resides in the cytoplasm. The protein localises to the endoplasmic reticulum. The catalysed reaction is a catechol + S-adenosyl-L-methionine = a guaiacol + S-adenosyl-L-homocysteine + H(+). In terms of biological role, catalyzes the O-methylation, and thereby the inactivation, of catecholamine neurotransmitters and catechol hormones. Required for auditory function. Component of the cochlear hair cell's mechanotransduction (MET) machinery. Involved in the assembly of the asymmetric tip-link MET complex. Required for transportation of TMC1 and TMC2 proteins into the mechanically sensitive stereocilia of the hair cells. The function in MET is independent of the enzymatic activity. In Rattus norvegicus (Rat), this protein is Transmembrane O-methyltransferase homolog.